The following is a 573-amino-acid chain: 2-succinyl-5-enolpyruvyl-6-hydroxy-3-cyclohexene-1-carboxylate synthase (573 aa).

This sequence belongs to the TPP enzyme family. MenD subfamily. In terms of assembly, homodimer. The cofactor is Mg(2+). Mn(2+) serves as cofactor. It depends on thiamine diphosphate as a cofactor.

It carries out the reaction isochorismate + 2-oxoglutarate + H(+) = 5-enolpyruvoyl-6-hydroxy-2-succinyl-cyclohex-3-ene-1-carboxylate + CO2. It participates in quinol/quinone metabolism; 1,4-dihydroxy-2-naphthoate biosynthesis; 1,4-dihydroxy-2-naphthoate from chorismate: step 2/7. Its pathway is quinol/quinone metabolism; menaquinone biosynthesis. In terms of biological role, catalyzes the thiamine diphosphate-dependent decarboxylation of 2-oxoglutarate and the subsequent addition of the resulting succinic semialdehyde-thiamine pyrophosphate anion to isochorismate to yield 2-succinyl-5-enolpyruvyl-6-hydroxy-3-cyclohexene-1-carboxylate (SEPHCHC). The protein is 2-succinyl-5-enolpyruvyl-6-hydroxy-3-cyclohexene-1-carboxylate synthase of Shewanella sp. (strain MR-4).